The chain runs to 457 residues: Fibrinogen C domain-containing protein 1 (457 aa).

A disordered region spans residues M1–Q20. The Cytoplasmic portion of the chain corresponds to M1–C33. The chain crosses the membrane as a helical; Signal-anchor for type II membrane protein span at residues T34–M54. Topologically, residues N55 to N457 are extracellular. The interval R211–S235 is disordered. The Fibrinogen C-terminal domain occupies C231–R454. N-linked (GlcNAc...) asparagine glycosylation is present at N233. Residues C240 and C269 are joined by a disulfide bond. An N-linked (GlcNAc...) asparagine glycan is attached at N336. Ca(2+)-binding residues include D389 and D391. A disulfide bridge links C397 with C410.

In terms of assembly, homotetramer; disulfide-linked.

The protein localises to the membrane. In terms of biological role, acetyl group-binding receptor which shows a calcium-dependent binding to acetylated structures such as chitin, some N-acetylated carbohydrates, and amino acids. The sequence is that of Fibrinogen C domain-containing protein 1 (fibcd1) from Xenopus tropicalis (Western clawed frog).